The chain runs to 413 residues: Eukaryotic initiation factor 4A-7 (413 aa).

A Q motif motif is present at residues 40-68; it reads DSFDAMGLQENLLRGIYAYGFEKPSAIQQ. A Helicase ATP-binding domain is found at 71–241; it reads IVPFCKGLDV…RKFMNKPVRI (171 aa). 84–91 contacts ATP; sequence AQSGTGKT. The DEAD box motif lies at 189–192; that stretch reads DEAD. The Helicase C-terminal domain maps to 252–413; the sequence is GIKQFYVNVD…ELPANVADLL (162 aa).

This sequence belongs to the DEAD box helicase family. eIF4A subfamily. In terms of assembly, eIF4F is a multi-subunit complex, the composition of which varies with external and internal environmental conditions. It is composed of at least EIF4A, EIF4E and EIF4G.

The catalysed reaction is ATP + H2O = ADP + phosphate + H(+). Functionally, ATP-dependent RNA helicase which is a subunit of the eIF4F complex involved in cap recognition and is required for mRNA binding to ribosome. In the current model of translation initiation, eIF4A unwinds RNA secondary structures in the 5'-UTR of mRNAs which is necessary to allow efficient binding of the small ribosomal subunit, and subsequent scanning for the initiator codon. The protein is Eukaryotic initiation factor 4A-7 of Nicotiana tabacum (Common tobacco).